The primary structure comprises 539 residues: MPLRDYNAAVDFVDRNVAEGRGGKIAFIDPQRSLSYGELRDAVARVGPMLARLGVEQENRIALVLKDTVDFPILFWGAIRAGIVPVLLNTRLTADQYRYLLEDSRSRVVFASSEFLPVIEEAAADLPHLRTIIAVGDAPAPTLQLANLLATEQEGGAPAATCADDIAYWQYSSGTTGMPKGVMHVHSSPRVMAENAGRRIGYREDDVVFSAAKLFFAYGLGNAMFCPMGIGATSVLYPERPTADSVFDTLRLHQPTLLFAVPTLYAAMLADPRSRTETLPDRLRLCVSAGEPLPAQVGLNWRNRFGHDIVNGVGSTEMGHLFLTNLPHAVEYGTSGVPVDGYRLRLVGDRGQDVADDEIGELLVSGGSSAAGYWNQRDKTRTTFVGEWTRTGDKYHRRADGVYTYCGRTDDIFKVSGIWVSPFEIEQALMSHAKVLEAAVIPAEDTDGLIKPKAFIVLASRGDIDPGALFDELKEHVKSAIGPWKYPRWIQIMDDLPKTSSGKLQRYLLREMTLGGIEATESAPSEPALYGRVVAGNGR.

Belongs to the ATP-dependent AMP-binding enzyme family. Benzoate-CoA ligase subfamily. As to quaternary structure, homodimer. In terms of processing, the N-terminus is blocked.

The enzyme catalyses 4-hydroxybenzoate + ATP + CoA = 4-hydroxybenzoyl-CoA + AMP + diphosphate. It carries out the reaction benzoate + ATP + CoA = benzoyl-CoA + AMP + diphosphate. Catalyzes the ligation of 4-hydroxybenzoate, benzoate or cyclohex-1,4-dienecarboxylate and CoA at the expense of ATP. The enzyme shows low activity towards cyclo-2,5-dienecarboxylate, 4-fluorobenzoate, 4-chlorobenzoate and 2-methoxybenzoate. This Rhodopseudomonas palustris (strain ATCC BAA-98 / CGA009) protein is 4-hydroxybenzoate--CoA/benzoate--CoA ligase (hbaA).